A 298-amino-acid polypeptide reads, in one-letter code: 4-hydroxy-tetrahydrodipicolinate synthase (298 aa).

Thr51 is a binding site for pyruvate. The active-site Proton donor/acceptor is the Tyr139. Lys167 acts as the Schiff-base intermediate with substrate in catalysis. Pyruvate is bound at residue Ile209.

It belongs to the DapA family. In terms of assembly, homotetramer; dimer of dimers.

The protein resides in the cytoplasm. It carries out the reaction L-aspartate 4-semialdehyde + pyruvate = (2S,4S)-4-hydroxy-2,3,4,5-tetrahydrodipicolinate + H2O + H(+). It functions in the pathway amino-acid biosynthesis; L-lysine biosynthesis via DAP pathway; (S)-tetrahydrodipicolinate from L-aspartate: step 3/4. Catalyzes the condensation of (S)-aspartate-beta-semialdehyde [(S)-ASA] and pyruvate to 4-hydroxy-tetrahydrodipicolinate (HTPA). This is 4-hydroxy-tetrahydrodipicolinate synthase from Haemophilus influenzae (strain PittGG).